The following is a 434-amino-acid chain: 3-phosphoshikimate 1-carboxyvinyltransferase (434 aa).

Residues Lys-22, Ser-23, and Arg-27 each contribute to the 3-phosphoshikimate site. Lys-22 contributes to the phosphoenolpyruvate binding site. Gly-93 and Arg-121 together coordinate phosphoenolpyruvate. 3-phosphoshikimate contacts are provided by Ser-168, Ser-169, Gln-170, Ser-199, Asp-320, and Lys-347. A phosphoenolpyruvate-binding site is contributed by Gln-170. Asp-320 serves as the catalytic Proton acceptor. Residues Arg-351, Arg-394, and Lys-419 each contribute to the phosphoenolpyruvate site.

This sequence belongs to the EPSP synthase family. Monomer.

It localises to the cytoplasm. The catalysed reaction is 3-phosphoshikimate + phosphoenolpyruvate = 5-O-(1-carboxyvinyl)-3-phosphoshikimate + phosphate. Its pathway is metabolic intermediate biosynthesis; chorismate biosynthesis; chorismate from D-erythrose 4-phosphate and phosphoenolpyruvate: step 6/7. Catalyzes the transfer of the enolpyruvyl moiety of phosphoenolpyruvate (PEP) to the 5-hydroxyl of shikimate-3-phosphate (S3P) to produce enolpyruvyl shikimate-3-phosphate and inorganic phosphate. The protein is 3-phosphoshikimate 1-carboxyvinyltransferase of Burkholderia multivorans (strain ATCC 17616 / 249).